Reading from the N-terminus, the 122-residue chain is Large ribosomal subunit protein uL18 (122 aa).

Residues 1 to 21 (MSKLSRKQQTQKRHRRLRRHL) are compositionally biased toward basic residues. The disordered stretch occupies residues 1-26 (MSKLSRKQQTQKRHRRLRRHLTGTSD).

Belongs to the universal ribosomal protein uL18 family. As to quaternary structure, part of the 50S ribosomal subunit; part of the 5S rRNA/L5/L18/L25 subcomplex. Contacts the 5S and 23S rRNAs.

In terms of biological role, this is one of the proteins that bind and probably mediate the attachment of the 5S RNA into the large ribosomal subunit, where it forms part of the central protuberance. The sequence is that of Large ribosomal subunit protein uL18 from Parasynechococcus marenigrum (strain WH8102).